Consider the following 112-residue polypeptide: Nitrogenase-stabilizing/protective protein NifW (112 aa).

It belongs to the NifW family. In terms of assembly, homotrimer; associates with NifD.

In terms of biological role, may protect the nitrogenase Fe-Mo protein from oxidative damage. In Paraburkholderia xenovorans (strain LB400), this protein is Nitrogenase-stabilizing/protective protein NifW.